The primary structure comprises 254 residues: Proteasome subunit alpha type-4 (254 aa).

Phosphothreonine is present on T60. Residues 235-254 (QIEQEKQEQQEQDKKKKSNH) form a disordered region. A compositionally biased stretch (basic and acidic residues) spans 237–248 (EQEKQEQQEQDK).

It belongs to the peptidase T1A family. The 26S proteasome consists of a 20S proteasome core and two 19S regulatory subunits. The 20S proteasome core is composed of 28 subunits that are arranged in four stacked rings, resulting in a barrel-shaped structure. The two end rings are each formed by seven alpha subunits, and the two central rings are each formed by seven beta subunits. The catalytic chamber with the active sites is on the inside of the barrel. Interacts with CIC1.

It is found in the cytoplasm. Its subcellular location is the nucleus. Functionally, the proteasome degrades poly-ubiquitinated proteins in the cytoplasm and in the nucleus. It is essential for the regulated turnover of proteins and for the removal of misfolded proteins. The proteasome is a multicatalytic proteinase complex that is characterized by its ability to cleave peptides with Arg, Phe, Tyr, Leu, and Glu adjacent to the leaving group at neutral or slightly basic pH. It has an ATP-dependent proteolytic activity. The protein is Proteasome subunit alpha type-4 (PRE6) of Saccharomyces cerevisiae (strain ATCC 204508 / S288c) (Baker's yeast).